The primary structure comprises 792 residues: Phosphoenolpyruvate synthase (792 aa).

Histidine 421 acts as the Tele-phosphohistidine intermediate in catalysis. Residues arginine 511, arginine 578, glutamate 680, glycine 701, serine 702, asparagine 703, and aspartate 704 each coordinate substrate. Glutamate 680 contributes to the Mg(2+) binding site. Residue aspartate 704 participates in Mg(2+) binding. The active-site Proton donor is cysteine 751.

Belongs to the PEP-utilizing enzyme family. In terms of assembly, homodimer. Requires Mg(2+) as cofactor.

It catalyses the reaction pyruvate + ATP + H2O = phosphoenolpyruvate + AMP + phosphate + 2 H(+). It functions in the pathway carbohydrate biosynthesis; gluconeogenesis. Activated by a Pi-dependent pyrophosphorylation and inactivated by an ADP-dependent phosphorylation on a regulatory threonine. Both reactions are mediated by the bifunctional serine/threonine kinase and phosphorylase PpsR. Functionally, catalyzes the phosphorylation of pyruvate to phosphoenolpyruvate. This Escherichia coli (strain K12) protein is Phosphoenolpyruvate synthase (ppsA).